A 371-amino-acid chain; its full sequence is Chorismate synthase (371 aa).

Arg48 and Arg54 together coordinate NADP(+). FMN-binding positions include 132–134 (RSS), 244–245 (NA), Gly289, 304–308 (KPTSS), and Arg330.

This sequence belongs to the chorismate synthase family. As to quaternary structure, homotetramer. The cofactor is FMNH2.

The enzyme catalyses 5-O-(1-carboxyvinyl)-3-phosphoshikimate = chorismate + phosphate. Its pathway is metabolic intermediate biosynthesis; chorismate biosynthesis; chorismate from D-erythrose 4-phosphate and phosphoenolpyruvate: step 7/7. Its function is as follows. Catalyzes the anti-1,4-elimination of the C-3 phosphate and the C-6 proR hydrogen from 5-enolpyruvylshikimate-3-phosphate (EPSP) to yield chorismate, which is the branch point compound that serves as the starting substrate for the three terminal pathways of aromatic amino acid biosynthesis. This reaction introduces a second double bond into the aromatic ring system. The protein is Chorismate synthase of Methylobacterium nodulans (strain LMG 21967 / CNCM I-2342 / ORS 2060).